We begin with the raw amino-acid sequence, 367 residues long: UDP-N-acetylenolpyruvoylglucosamine reductase (367 aa).

Residues 29–205 form the FAD-binding PCMH-type domain; it reads VGPVAQRVIT…LEVEFKLDAS (177 aa). The active site involves Arg177. Ser260 (proton donor) is an active-site residue. Residue Glu359 is part of the active site.

It belongs to the MurB family. FAD serves as cofactor.

Its subcellular location is the cytoplasm. It catalyses the reaction UDP-N-acetyl-alpha-D-muramate + NADP(+) = UDP-N-acetyl-3-O-(1-carboxyvinyl)-alpha-D-glucosamine + NADPH + H(+). Its pathway is cell wall biogenesis; peptidoglycan biosynthesis. In terms of biological role, cell wall formation. In Mycobacterium leprae (strain Br4923), this protein is UDP-N-acetylenolpyruvoylglucosamine reductase.